The chain runs to 37 residues: Antifungal protein 4 (37 aa).

The protein localises to the secreted. In terms of biological role, possesses antifungal activity against P.infestans but not F.graminearum. The polypeptide is Antifungal protein 4 (Malva parviflora (Little mallow)).